A 219-amino-acid chain; its full sequence is Thiamine-phosphate synthase (219 aa).

4-amino-2-methyl-5-(diphosphooxymethyl)pyrimidine-binding positions include 48 to 52 and Asn80; that span reads QLREK. 2 residues coordinate Mg(2+): Asp81 and Asp100. Residue Ser119 coordinates 4-amino-2-methyl-5-(diphosphooxymethyl)pyrimidine. A 2-[(2R,5Z)-2-carboxy-4-methylthiazol-5(2H)-ylidene]ethyl phosphate-binding site is contributed by 145–147; sequence TPT. Position 148 (Lys148) interacts with 4-amino-2-methyl-5-(diphosphooxymethyl)pyrimidine. Residues Gly176 and 196 to 197 each bind 2-[(2R,5Z)-2-carboxy-4-methylthiazol-5(2H)-ylidene]ethyl phosphate; that span reads VS.

Belongs to the thiamine-phosphate synthase family. The cofactor is Mg(2+).

It catalyses the reaction 2-[(2R,5Z)-2-carboxy-4-methylthiazol-5(2H)-ylidene]ethyl phosphate + 4-amino-2-methyl-5-(diphosphooxymethyl)pyrimidine + 2 H(+) = thiamine phosphate + CO2 + diphosphate. The enzyme catalyses 2-(2-carboxy-4-methylthiazol-5-yl)ethyl phosphate + 4-amino-2-methyl-5-(diphosphooxymethyl)pyrimidine + 2 H(+) = thiamine phosphate + CO2 + diphosphate. The catalysed reaction is 4-methyl-5-(2-phosphooxyethyl)-thiazole + 4-amino-2-methyl-5-(diphosphooxymethyl)pyrimidine + H(+) = thiamine phosphate + diphosphate. It functions in the pathway cofactor biosynthesis; thiamine diphosphate biosynthesis; thiamine phosphate from 4-amino-2-methyl-5-diphosphomethylpyrimidine and 4-methyl-5-(2-phosphoethyl)-thiazole: step 1/1. Condenses 4-methyl-5-(beta-hydroxyethyl)thiazole monophosphate (THZ-P) and 2-methyl-4-amino-5-hydroxymethyl pyrimidine pyrophosphate (HMP-PP) to form thiamine monophosphate (TMP). This is Thiamine-phosphate synthase from Albidiferax ferrireducens (strain ATCC BAA-621 / DSM 15236 / T118) (Rhodoferax ferrireducens).